The chain runs to 387 residues: 3-ketoacyl-CoA thiolase (387 aa).

The active-site Acyl-thioester intermediate is Cys91. Active-site proton acceptor residues include His343 and Cys373.

Belongs to the thiolase-like superfamily. Thiolase family. As to quaternary structure, heterotetramer of two alpha chains (FadB) and two beta chains (FadA).

The protein localises to the cytoplasm. It catalyses the reaction an acyl-CoA + acetyl-CoA = a 3-oxoacyl-CoA + CoA. The protein operates within lipid metabolism; fatty acid beta-oxidation. Catalyzes the final step of fatty acid oxidation in which acetyl-CoA is released and the CoA ester of a fatty acid two carbons shorter is formed. The polypeptide is 3-ketoacyl-CoA thiolase (Vibrio cholerae serotype O1 (strain ATCC 39541 / Classical Ogawa 395 / O395)).